A 563-amino-acid polypeptide reads, in one-letter code: RUN and FYVE domain-containing protein 4 (563 aa).

In terms of domain architecture, RUN spans 33 to 166 (TETSAELHRL…VAFNLDLQRP (134 aa)). Disordered stretches follow at residues 176–327 (SESR…TTEG) and 375–397 (KKSS…MQED). Basic and acidic residues-rich tracts occupy residues 196 to 205 (GFPEEVRCSR) and 263 to 284 (ETER…RKFL). The span at 285–295 (ENSTASIQQQR) shows a compositional bias: polar residues. Over residues 297-312 (RAKDVKMQLTGRKVEG) the composition is skewed to basic and acidic residues. Positions 385–396 (EWTGVTSGTMQE) are enriched in polar residues. Residues 421–462 (QAQCQEQLRAQEAELQALQEQLSRCQKERALLQVKLEQKQQE) adopt a coiled-coil conformation. The segment at 428-558 (LRAQEAELQA…RCCPTCAQQE (131 aa)) adopts an FYVE-type zinc-finger fold. Zn(2+) is bound by residues C513, C516, C529, C532, C537, C540, C551, and C554.

In terms of assembly, forms homodimers (via coiled coil domain). Forms a ternary complex with RAB7A and LAMP2; the interaction with RAB7A is mediated by RUFY4 (via RUN and coiled coil domains). Interacts with GTP-, but not GDP-bound ARL8A and ARL8B. Interacts with dynactin/DCTN1 and the dynein intermediate chain DYNC1I1/2. Expressed in dendritic cells.

Its subcellular location is the cytoplasmic vesicle. The protein localises to the autophagosome. The protein resides in the lysosome. Functionally, ARL8 effector that promotes the coupling of endolysosomes to dynein-dynactin for retrograde transport along microtubules. Acts by binding both GTP-bound ARL8 and dynein-dynactin. In nonneuronal cells, promotes concentration of endolysosomes in the juxtanuclear area. In hippocampal neurons, drives retrograde transport of endolysosomes from the axon to the soma. Positive regulator of macroautophagy in dendritic cells. Increases autophagic flux, probably by stimulating both autophagosome formation and facilitating tethering with lysosomes. Binds to phosphatidylinositol 3-phosphate (PtdIns3P) through its FYVE-type zinc finger. Positive regulator of osteosclast bone-resorbing activity, possibly by promoting late endosome-lysosome fusion by acting as an adapter protein between RAB7A on late endosomes and LAMP2 on primary lysosomes. This is RUN and FYVE domain-containing protein 4 (Rufy4) from Mus musculus (Mouse).